A 141-amino-acid chain; its full sequence is Ribosome-binding factor A (141 aa).

Residues 120–141 (SPHVQRDLQENDDQEDDSEGSL) form a disordered region. A compositionally biased stretch (acidic residues) spans 129–141 (ENDDQEDDSEGSL).

The protein belongs to the RbfA family. Monomer. Binds 30S ribosomal subunits, but not 50S ribosomal subunits or 70S ribosomes.

It is found in the cytoplasm. Functionally, one of several proteins that assist in the late maturation steps of the functional core of the 30S ribosomal subunit. Associates with free 30S ribosomal subunits (but not with 30S subunits that are part of 70S ribosomes or polysomes). Required for efficient processing of 16S rRNA. May interact with the 5'-terminal helix region of 16S rRNA. This Zymomonas mobilis subsp. mobilis (strain ATCC 31821 / ZM4 / CP4) protein is Ribosome-binding factor A.